A 186-amino-acid polypeptide reads, in one-letter code: Protein GrpE (186 aa).

It belongs to the GrpE family. As to quaternary structure, homodimer.

The protein localises to the cytoplasm. Functionally, participates actively in the response to hyperosmotic and heat shock by preventing the aggregation of stress-denatured proteins, in association with DnaK and GrpE. It is the nucleotide exchange factor for DnaK and may function as a thermosensor. Unfolded proteins bind initially to DnaJ; upon interaction with the DnaJ-bound protein, DnaK hydrolyzes its bound ATP, resulting in the formation of a stable complex. GrpE releases ADP from DnaK; ATP binding to DnaK triggers the release of the substrate protein, thus completing the reaction cycle. Several rounds of ATP-dependent interactions between DnaJ, DnaK and GrpE are required for fully efficient folding. The polypeptide is Protein GrpE (Novosphingobium aromaticivorans (strain ATCC 700278 / DSM 12444 / CCUG 56034 / CIP 105152 / NBRC 16084 / F199)).